Consider the following 234-residue polypeptide: UPF0173 metal-dependent hydrolase Rleg2_1519 (234 aa).

This sequence belongs to the UPF0173 family.

This Rhizobium leguminosarum bv. trifolii (strain WSM2304) protein is UPF0173 metal-dependent hydrolase Rleg2_1519.